Here is a 362-residue protein sequence, read N- to C-terminus: Sphingosine 1-phosphate receptor 1 (362 aa).

Topologically, residues 1–25 (MDDLIARHYNFTGKFRKVHKDPGLK) are extracellular. An N-linked (GlcNAc...) asparagine glycan is attached at asparagine 10. A helical transmembrane segment spans residues 26–47 (ADSVVFIIVCCFIILENVLVLL). Over 48–61 (TIWRTKKFHKPMYY) the chain is Cytoplasmic. A helical transmembrane segment spans residues 62–83 (FIGNLALSDLLAGVVYTANILL). The Extracellular segment spans residues 84–95 (SGANTYKLTPTQ). The helical transmembrane segment at 96–117 (WFFREGSMFVALAASVFSLLAI) threads the bilayer. 99 to 100 (RE) is a sphing-4-enine 1-phosphate binding site. The Cytoplasmic portion of the chain corresponds to 118–139 (AIERHLTMLKMKLHNNGKTCRV). The chain crosses the membrane as a helical span at residues 140 to 161 (FMLISTVWFIAAILGGLPVMGW). Topologically, residues 162–175 (NCIDSMNNCSTVLP) are extracellular. The cysteines at positions 163 and 170 are disulfide-linked. Residue asparagine 169 is glycosylated (N-linked (GlcNAc...) asparagine). Residues 176–203 (LYHKAYILFCTTVFSVILMAIVILYARI) traverse the membrane as a helical segment. Residues 204–238 (YALVRTRSRKLVFRKVANGRGSNKSSEKSMALLKT) are Cytoplasmic-facing. Residues 239 to 259 (VIIVLSCFIACWAPLFILLLL) form a helical membrane-spanning segment. Position 246 to 250 (246 to 250 (FIACW)) interacts with sphing-4-enine 1-phosphate. Residues 260–270 (DVACQTLTCSI) lie on the Extracellular side of the membrane. A disulfide bond links cysteine 263 and cysteine 268. Residues 271 to 291 (LYKAEWFLALAVLNSAMNPLI) form a helical membrane-spanning segment. Topologically, residues 292-362 (YTLTSNEMRR…VSSGNITSSS (71 aa)) are cytoplasmic. Cysteine 309 is lipidated: S-palmitoyl cysteine. The segment at 328–362 (FSRSKSDNSSHPNKDEPEYSPRETIVSSGNITSSS) is disordered. Residues 329–348 (SRSKSDNSSHPNKDEPEYSP) are compositionally biased toward basic and acidic residues. The span at 352 to 362 (IVSSGNITSSS) shows a compositional bias: polar residues.

The protein belongs to the G-protein coupled receptor 1 family.

Its subcellular location is the cell membrane. Its function is as follows. G-protein coupled receptor for the bioactive lysosphingolipid sphingosine 1-phosphate (S1P) that seems to be coupled to the G(i) subclass of heteromeric G proteins. Signaling leads to the activation of RAC1, SRC, PTK2/FAK1 and MAP kinases. Plays an important role in cell migration, probably via its role in the reorganization of the actin cytoskeleton and the formation of lamellipodia in response to stimuli that increase the activity of the sphingosine kinase SPHK1. Required for normal chemotaxis toward sphingosine 1-phosphate. This is Sphingosine 1-phosphate receptor 1 (s1pr1) from Danio rerio (Zebrafish).